The sequence spans 330 residues: 4-hydroxythreonine-4-phosphate dehydrogenase (330 aa).

Substrate is bound by residues His134 and Thr135. Residues His164, His209, and His264 each coordinate a divalent metal cation. Lys272, Asn281, and Arg290 together coordinate substrate.

It belongs to the PdxA family. Homodimer. The cofactor is Zn(2+). Requires Mg(2+) as cofactor. Co(2+) is required as a cofactor.

The protein localises to the cytoplasm. The catalysed reaction is 4-(phosphooxy)-L-threonine + NAD(+) = 3-amino-2-oxopropyl phosphate + CO2 + NADH. It functions in the pathway cofactor biosynthesis; pyridoxine 5'-phosphate biosynthesis; pyridoxine 5'-phosphate from D-erythrose 4-phosphate: step 4/5. Catalyzes the NAD(P)-dependent oxidation of 4-(phosphooxy)-L-threonine (HTP) into 2-amino-3-oxo-4-(phosphooxy)butyric acid which spontaneously decarboxylates to form 3-amino-2-oxopropyl phosphate (AHAP). The chain is 4-hydroxythreonine-4-phosphate dehydrogenase from Pseudoalteromonas translucida (strain TAC 125).